The following is a 207-amino-acid chain: Large ribosomal subunit protein bL20 (207 aa).

Positions 117–161 are disordered; sequence QETQPQPEEKTSLQPEKVLSTELSEEKSDDTLETKPQTTQVKAKK. Basic and acidic residues predominate over residues 140–149; it reads SEEKSDDTLE.

This sequence belongs to the bacterial ribosomal protein bL20 family.

Its function is as follows. Binds directly to 23S ribosomal RNA and is necessary for the in vitro assembly process of the 50S ribosomal subunit. It is not involved in the protein synthesizing functions of that subunit. The chain is Large ribosomal subunit protein bL20 from Onion yellows phytoplasma (strain OY-M).